The primary structure comprises 243 residues: R-spondin-2 (243 aa).

Residues 1 to 21 form the signal peptide; sequence MQFQLFSFALIILNCVDYSHC. Intrachain disulfides connect C40/C46, C43/C52, C55/C74, C78/C93, C96/C104, C101/C110, C113/C124, C128/C141, C145/C187, C156/C163, and C196/C203. Residues 90–134 form an FU repeat; that stretch reads MNRCSRCRIENCDSCFSRDFCIKCKSGFYSLKGQCFEECPEGFAP. Residues 144-204 enclose the TSP type-1 domain; that stretch reads GCEVGPWSEW…RCKMAIRHCP (61 aa). Residue N160 is glycosylated (N-linked (GlcNAc...) asparagine). A compositionally biased stretch (basic residues) spans 204–224; it reads PGGKRTTKKKDKRNKKKKKKL. Positions 204 to 243 are disordered; the sequence is PGGKRTTKKKDKRNKKKKKKLLERAQEQHSVVLATDRSSQ.

This sequence belongs to the R-spondin family. Binds heparin.

It localises to the secreted. Functionally, activator of the canonical Wnt signaling pathway by acting as a ligand for lgr4-6 receptors. Upon binding to lgr4-6 (lgr4, lgr5 or lgr6), lgr4-6 associate with phosphorylated lrp6 and frizzled receptors that are activated by extracellular Wnt receptors, triggering the canonical Wnt signaling pathway to increase expression of target genes. Acts both in the canonical Wnt/beta-catenin-dependent pathway and in non-canonical Wnt signaling pathway. Activates neural markers and promotes muscle formation. Overexpression blocks activin, nodal and BMP4 signaling, suggesting that it may negatively regulate the TGF-beta pathway. During embryonic development, plays a crucial role in limb specification, amplifying the Wnt signaling pathway independently of LGR4-6 receptors, possibly by acting as a direct antagonistic ligand to RNF43 and ZNRF3, hence governing the number of limbs an embryo should form. The sequence is that of R-spondin-2 (rspo2) from Xenopus laevis (African clawed frog).